Consider the following 214-residue polypeptide: Osteoclast-stimulating factor 1 (214 aa).

An SH3 domain is found at 12-71; it reads GQVKVFRALFTFDPRTPDELYFEEGDILYISDTSDTNWWKGTCRGRTGLIPSNYVAEQAE. ANK repeat units lie at residues 72 to 101, 105 to 135, and 139 to 168; these read TIDH…GING, AGNT…ELNQ, and LGDT…RTDI.

In terms of tissue distribution, ubiquitously expressed.

It localises to the cytoplasm. Functionally, induces bone resorption, acting probably through a signaling cascade which results in the secretion of factor(s) enhancing osteoclast formation and activity. The protein is Osteoclast-stimulating factor 1 (ostf1) of Monopterus albus (Swamp eel).